A 305-amino-acid chain; its full sequence is Protoheme IX farnesyltransferase (305 aa).

Transmembrane regions (helical) follow at residues 29 to 49 (VTQL…PGMV), 51 to 71 (WSVL…AFAI), 101 to 121 (TLIF…VFAN), 123 to 143 (LTMW…TILL), 151 to 171 (IVIG…AVSG), 177 to 197 (AWFL…ALAL), 221 to 241 (LLHI…PFVY), 244 to 264 (SGYI…GYAW), and 283 to 303 (ILYL…KFVP).

It belongs to the UbiA prenyltransferase family. Protoheme IX farnesyltransferase subfamily.

Its subcellular location is the cell inner membrane. It carries out the reaction heme b + (2E,6E)-farnesyl diphosphate + H2O = Fe(II)-heme o + diphosphate. The protein operates within porphyrin-containing compound metabolism; heme O biosynthesis; heme O from protoheme: step 1/1. In terms of biological role, converts heme B (protoheme IX) to heme O by substitution of the vinyl group on carbon 2 of heme B porphyrin ring with a hydroxyethyl farnesyl side group. In Cupriavidus metallidurans (strain ATCC 43123 / DSM 2839 / NBRC 102507 / CH34) (Ralstonia metallidurans), this protein is Protoheme IX farnesyltransferase.